A 339-amino-acid polypeptide reads, in one-letter code: MSDALKPLIGAAADRALSRAEAEDAFRILFEGEATPSQIGGFLMALRTRGETVAEYAAAASVMRAKCNAVKAPAGAMDIVGTGGDGKGTLNISTATAFVVAGAGVVVAKHGNRNLSSKSGAADALSQMGLNVMVGPEVVERALAEAGIGFMMAPMHHPAIAHVMPTRAELGTRTIFNILGPLTNPAGVKRQLTGAFSRDLIRPMAQTLGALGSEKAWLVHGSDGTDELTITGVSWVAALGPDGSVTDMEIHPEDAGLPVHPFEAIVGGTPAQNAADFKALLAGEASAYRDAVLLNAAAALVVADAASTLQDGVEMAATSIDSGAAARKIEAVAQITQAT.

Residues Gly-81, 84-85, Thr-89, 91-94, 109-117, and Ala-121 each bind 5-phospho-alpha-D-ribose 1-diphosphate; these read GD, NIST, and KHGNRNLSS. Gly-81 is a binding site for anthranilate. Ser-93 contacts Mg(2+). Residue Asn-112 participates in anthranilate binding. Residue Arg-167 participates in anthranilate binding. The Mg(2+) site is built by Asp-226 and Glu-227.

It belongs to the anthranilate phosphoribosyltransferase family. Homodimer. Mg(2+) is required as a cofactor.

The enzyme catalyses N-(5-phospho-beta-D-ribosyl)anthranilate + diphosphate = 5-phospho-alpha-D-ribose 1-diphosphate + anthranilate. Its pathway is amino-acid biosynthesis; L-tryptophan biosynthesis; L-tryptophan from chorismate: step 2/5. Its function is as follows. Catalyzes the transfer of the phosphoribosyl group of 5-phosphorylribose-1-pyrophosphate (PRPP) to anthranilate to yield N-(5'-phosphoribosyl)-anthranilate (PRA). This Roseobacter denitrificans (strain ATCC 33942 / OCh 114) (Erythrobacter sp. (strain OCh 114)) protein is Anthranilate phosphoribosyltransferase.